Consider the following 370-residue polypeptide: Probable aspartic-type endopeptidase ARB_04018 (370 aa).

A signal peptide spans 1–21 (MWHSPFSTAFTLFLGFFTLTL). N-linked (GlcNAc...) asparagine glycans are attached at residues Asn80 and Asn102. The Peptidase A1 domain maps to 94–367 (FVNEITIGND…DHDGPKMGFA (274 aa)). Asp110 is an active-site residue. The N-linked (GlcNAc...) asparagine glycan is linked to Asn251. Asp261 is an active-site residue. The N-linked (GlcNAc...) asparagine glycan is linked to Asn298.

Belongs to the peptidase A1 family.

The protein resides in the secreted. Its function is as follows. Probable aspartic-type endopeptidase which contributes to virulence. This is Probable aspartic-type endopeptidase ARB_04018 from Arthroderma benhamiae (strain ATCC MYA-4681 / CBS 112371) (Trichophyton mentagrophytes).